A 217-amino-acid polypeptide reads, in one-letter code: Adenylate kinase (217 aa).

An ATP-binding site is contributed by 10–15; that stretch reads GIGKGT. The segment at 30–59 is NMP; the sequence is ATGDIFRKNFKENTELGILIKKIIAQGLLV. AMP contacts are provided by residues Thr-31, Arg-36, 57 to 59, 85 to 88, and Gln-92; these read LLV and GFPR. Residues 126–163 form an LID region; it reads GRRICPECGKVYHIENIPPKTPGICDKDQKTLIQREDD. Residue Arg-127 coordinates ATP. Cys-130 and Cys-133 together coordinate Zn(2+). 136–137 is an ATP binding site; the sequence is VY. Zn(2+) is bound by residues Cys-150 and Asp-153. AMP contacts are provided by Arg-160 and Arg-171. Gln-199 serves as a coordination point for ATP.

Belongs to the adenylate kinase family. As to quaternary structure, monomer.

It is found in the cytoplasm. The enzyme catalyses AMP + ATP = 2 ADP. Its pathway is purine metabolism; AMP biosynthesis via salvage pathway; AMP from ADP: step 1/1. In terms of biological role, catalyzes the reversible transfer of the terminal phosphate group between ATP and AMP. Plays an important role in cellular energy homeostasis and in adenine nucleotide metabolism. This chain is Adenylate kinase, found in Onion yellows phytoplasma (strain OY-M).